The chain runs to 445 residues: FAD-dependent monooxygenase sorC (445 aa).

A helical membrane pass occupies residues 8–28 (PFEVAIVGGGITGLALAVGLL). The N-linked (GlcNAc...) asparagine glycan is linked to asparagine 31. The FAD site is built by glutamate 38 and arginine 119. Arginine 201 is an active-site residue. Aspartate 323 and alanine 336 together coordinate FAD. Asparagine 358 carries an N-linked (GlcNAc...) asparagine glycan.

The protein belongs to the paxM FAD-dependent monooxygenase family. It depends on FAD as a cofactor.

The protein resides in the membrane. It participates in secondary metabolite biosynthesis. In terms of biological role, FAD-dependent monooxygenase; part of the gene cluster that mediates the biosynthesis of sorbicillinoids, a diverse group of yellow secondary metabolites that restrict growth of competing pathogenic fungi but not of bacteria. Sorbicillinoids biosynthesis requires the action of two PKSs. SorA iteratively combines three acetyl units and the growing chain is modified by the ketoacyl reductase subunit, and optional by the enoyl reductase subunit in the second cycle. The polyketide is then handed over to the PKS SorB, which adds three more acetyl units, and two methyl groups. SorB releases an aldehyde, which undergoes spontaneous cyclization resulting in the formation of sorbicillin or 2',3'-dihydrosorbicillin. The monooxygenase sorC oxidizes sorbicillin and 2',3'-dihydrosorbicillin to 2',3'-dihydrosorbicillinol and sorbicillinol, respectively. The oxidoreductase sorD further converts sorbicillinol into oxosorbicillinol. Sorbicillinol is the building block for the other sorbicillinoids such as disorbicillinol, bisvertinolon, and dihydrobisvertinolone. This is FAD-dependent monooxygenase sorC from Penicillium rubens (strain ATCC 28089 / DSM 1075 / NRRL 1951 / Wisconsin 54-1255) (Penicillium chrysogenum).